The sequence spans 394 residues: Lipase 3 (394 aa).

An N-terminal signal peptide occupies residues 1-20; that stretch reads MTRGALKVTILLVGLGLVLA. The N-linked (GlcNAc...) asparagine glycan is linked to Asn131. Active-site charge relay system residues include Ser164 and His369.

Belongs to the AB hydrolase superfamily. Lipase family. Fat body.

The sequence is that of Lipase 3 (Lip3) from Drosophila melanogaster (Fruit fly).